Consider the following 351-residue polypeptide: Geranylgeranyl pyrophosphate synthase (351 aa).

Residues Lys-55, Arg-58, and Gln-93 each contribute to the isopentenyl diphosphate site. Asp-100 and Asp-104 together coordinate Mg(2+). Arg-109 lines the dimethylallyl diphosphate pocket. Residue Arg-110 coordinates isopentenyl diphosphate. 5 residues coordinate dimethylallyl diphosphate: Lys-196, Thr-197, Gln-236, Lys-253, and Lys-262.

The protein belongs to the FPP/GGPP synthase family. As to quaternary structure, interacts with fps1. Mg(2+) is required as a cofactor.

It localises to the cytoplasm. The protein resides in the nucleus. The catalysed reaction is isopentenyl diphosphate + dimethylallyl diphosphate = (2E)-geranyl diphosphate + diphosphate. The enzyme catalyses isopentenyl diphosphate + (2E)-geranyl diphosphate = (2E,6E)-farnesyl diphosphate + diphosphate. It carries out the reaction isopentenyl diphosphate + (2E,6E)-farnesyl diphosphate = (2E,6E,10E)-geranylgeranyl diphosphate + diphosphate. Its pathway is isoprenoid biosynthesis; farnesyl diphosphate biosynthesis; farnesyl diphosphate from geranyl diphosphate and isopentenyl diphosphate: step 1/1. It participates in isoprenoid biosynthesis; geranyl diphosphate biosynthesis; geranyl diphosphate from dimethylallyl diphosphate and isopentenyl diphosphate: step 1/1. The protein operates within isoprenoid biosynthesis; geranylgeranyl diphosphate biosynthesis; geranylgeranyl diphosphate from farnesyl diphosphate and isopentenyl diphosphate: step 1/1. In terms of biological role, catalyzes the trans-addition of the 3 molecules of IPP onto DMAPP to form geranylgeranyl pyrophosphate. Required for the membrane attachment of ypt7 and rhb1. May be involved in vesicle trafficking and protein sorting. Required for forespore membrane formation. In Schizosaccharomyces pombe (strain 972 / ATCC 24843) (Fission yeast), this protein is Geranylgeranyl pyrophosphate synthase (spo9).